A 156-amino-acid chain; its full sequence is Small ribosomal subunit protein uS7 (156 aa).

The protein belongs to the universal ribosomal protein uS7 family. In terms of assembly, part of the 30S ribosomal subunit. Contacts proteins S9 and S11.

One of the primary rRNA binding proteins, it binds directly to 16S rRNA where it nucleates assembly of the head domain of the 30S subunit. Is located at the subunit interface close to the decoding center, probably blocks exit of the E-site tRNA. This is Small ribosomal subunit protein uS7 from Mycobacteroides abscessus (strain ATCC 19977 / DSM 44196 / CCUG 20993 / CIP 104536 / JCM 13569 / NCTC 13031 / TMC 1543 / L948) (Mycobacterium abscessus).